The primary structure comprises 406 residues: Tubby-like F-box protein 3 (406 aa).

Positions 50 to 105 (SCWASMPPELLRDVLMRIEQSEDTWPSRKNVVSCAGVCRNWREIVKEIVRVPELSS) constitute an F-box domain.

Belongs to the TUB family. Ubiquitous at low levels. Not detected in mature siliques.

The protein localises to the cell membrane. It localises to the plastid. Its subcellular location is the nucleus. It is found in the nucleoplasm. The protein resides in the cytoplasm. Its function is as follows. Involved in abiotic stress signaling. Tethered to plasma membrane (PM) and probably bound to phosphatidylinositol 4,5-bisphosphate. Abiotic stresses (drought, salt, H(2)O(2)) trigger phospholipase C mediated PM dislogement and plastidial and nucleocytosolic relocation of TULP3. This Arabidopsis thaliana (Mouse-ear cress) protein is Tubby-like F-box protein 3.